We begin with the raw amino-acid sequence, 226 residues long: Enolase-phosphatase E1 (226 aa).

It belongs to the HAD-like hydrolase superfamily. MasA/MtnC family. Monomer. Mg(2+) is required as a cofactor.

It catalyses the reaction 5-methylsulfanyl-2,3-dioxopentyl phosphate + H2O = 1,2-dihydroxy-5-(methylsulfanyl)pent-1-en-3-one + phosphate. Its pathway is amino-acid biosynthesis; L-methionine biosynthesis via salvage pathway; L-methionine from S-methyl-5-thio-alpha-D-ribose 1-phosphate: step 3/6. The protein operates within amino-acid biosynthesis; L-methionine biosynthesis via salvage pathway; L-methionine from S-methyl-5-thio-alpha-D-ribose 1-phosphate: step 4/6. Bifunctional enzyme that catalyzes the enolization of 2,3-diketo-5-methylthiopentyl-1-phosphate (DK-MTP-1-P) into the intermediate 2-hydroxy-3-keto-5-methylthiopentenyl-1-phosphate (HK-MTPenyl-1-P), which is then dephosphorylated to form the acireductone 1,2-dihydroxy-3-keto-5-methylthiopentene (DHK-MTPene). The sequence is that of Enolase-phosphatase E1 from Shewanella oneidensis (strain ATCC 700550 / JCM 31522 / CIP 106686 / LMG 19005 / NCIMB 14063 / MR-1).